A 160-amino-acid polypeptide reads, in one-letter code: SsrA-binding protein (160 aa).

It belongs to the SmpB family.

The protein resides in the cytoplasm. In terms of biological role, required for rescue of stalled ribosomes mediated by trans-translation. Binds to transfer-messenger RNA (tmRNA), required for stable association of tmRNA with ribosomes. tmRNA and SmpB together mimic tRNA shape, replacing the anticodon stem-loop with SmpB. tmRNA is encoded by the ssrA gene; the 2 termini fold to resemble tRNA(Ala) and it encodes a 'tag peptide', a short internal open reading frame. During trans-translation Ala-aminoacylated tmRNA acts like a tRNA, entering the A-site of stalled ribosomes, displacing the stalled mRNA. The ribosome then switches to translate the ORF on the tmRNA; the nascent peptide is terminated with the 'tag peptide' encoded by the tmRNA and targeted for degradation. The ribosome is freed to recommence translation, which seems to be the essential function of trans-translation. This is SsrA-binding protein from Citrobacter koseri (strain ATCC BAA-895 / CDC 4225-83 / SGSC4696).